Reading from the N-terminus, the 256-residue chain is uncharacterized protein (256 aa).

An N-terminal signal peptide occupies residues 1–24 (MIKRVNKLVLGISLLFLVISITAG). C25 is lipidated: N-palmitoyl cysteine. C25 is lipidated: S-diacylglycerol cysteine.

Belongs to the staphylococcal tandem lipoprotein family.

It is found in the cell membrane. This is an uncharacterized protein from Staphylococcus aureus.